The following is a 106-amino-acid chain: Putative membrane protein insertion efficiency factor (106 aa).

Belongs to the UPF0161 family.

It is found in the cell inner membrane. Could be involved in insertion of integral membrane proteins into the membrane. This Methylacidiphilum infernorum (isolate V4) (Methylokorus infernorum (strain V4)) protein is Putative membrane protein insertion efficiency factor.